The following is a 353-amino-acid chain: Photosystem II protein D1 (353 aa).

An N-acetylthreonine modification is found at threonine 2. The residue at position 2 (threonine 2) is a Phosphothreonine. 3 consecutive transmembrane segments (helical) span residues 29 to 46 (YIGW…TATS), 118 to 133 (HFLL…EWEL), and 142 to 156 (WIAV…AATA). Histidine 118 provides a ligand contact to chlorophyll a. Tyrosine 126 lines the pheophytin a pocket. Residues aspartate 170 and glutamate 189 each coordinate [CaMn4O5] cluster. The helical transmembrane segment at 197–218 (FHMLGVAGVFGGSLFSAMHGSL) threads the bilayer. Histidine 198 provides a ligand contact to chlorophyll a. Residues histidine 215 and 264–265 (SF) each bind a quinone. Fe cation is bound at residue histidine 215. A Fe cation-binding site is contributed by histidine 272. Residues 274–288 (FLAAWPVVGIWFTAL) form a helical membrane-spanning segment. [CaMn4O5] cluster contacts are provided by histidine 332, glutamate 333, aspartate 342, and alanine 344. A propeptide spanning residues 345–353 (AIEAPSTNG) is cleaved from the precursor.

The protein belongs to the reaction center PufL/M/PsbA/D family. As to quaternary structure, PSII is composed of 1 copy each of membrane proteins PsbA, PsbB, PsbC, PsbD, PsbE, PsbF, PsbH, PsbI, PsbJ, PsbK, PsbL, PsbM, PsbT, PsbX, PsbY, PsbZ, Psb30/Ycf12, at least 3 peripheral proteins of the oxygen-evolving complex and a large number of cofactors. It forms dimeric complexes. The D1/D2 heterodimer binds P680, chlorophylls that are the primary electron donor of PSII, and subsequent electron acceptors. It shares a non-heme iron and each subunit binds pheophytin, quinone, additional chlorophylls, carotenoids and lipids. D1 provides most of the ligands for the Mn4-Ca-O5 cluster of the oxygen-evolving complex (OEC). There is also a Cl(-1) ion associated with D1 and D2, which is required for oxygen evolution. The PSII complex binds additional chlorophylls, carotenoids and specific lipids. serves as cofactor. In terms of processing, tyr-161 forms a radical intermediate that is referred to as redox-active TyrZ, YZ or Y-Z. Post-translationally, C-terminally processed by CTPA; processing is essential to allow assembly of the oxygen-evolving complex and thus photosynthetic growth.

It localises to the plastid. Its subcellular location is the chloroplast thylakoid membrane. The catalysed reaction is 2 a plastoquinone + 4 hnu + 2 H2O = 2 a plastoquinol + O2. In terms of biological role, photosystem II (PSII) is a light-driven water:plastoquinone oxidoreductase that uses light energy to abstract electrons from H(2)O, generating O(2) and a proton gradient subsequently used for ATP formation. It consists of a core antenna complex that captures photons, and an electron transfer chain that converts photonic excitation into a charge separation. The D1/D2 (PsbA/PsbD) reaction center heterodimer binds P680, the primary electron donor of PSII as well as several subsequent electron acceptors. This chain is Photosystem II protein D1, found in Citrus sinensis (Sweet orange).